Here is a 149-residue protein sequence, read N- to C-terminus: Large ribosomal subunit protein bL9 (149 aa).

It belongs to the bacterial ribosomal protein bL9 family.

Its function is as follows. Binds to the 23S rRNA. The chain is Large ribosomal subunit protein bL9 from Legionella pneumophila subsp. pneumophila (strain Philadelphia 1 / ATCC 33152 / DSM 7513).